The chain runs to 786 residues: MLERTLRVLEYNKVKEQLLEHTASSLGRDKVKNLVPSTDFEEIVELQETTDEAAKVIRLKGHVPLGGISDIRANIKRAKIGSMLSPHELIEIASTMYGSRQMKRFIDDMIDNGVELPILETHVAQIVSLYDLEKKITNCIGDGGEVVDSASDKLRGIRNQIRTAESRIREKLENMTRSSNAQKMLSDAIVTIRNERYVIPVKQEYRGVYGGIVHDQSASGQTLFIEPQVIVELNNALQEARVKEKQEVERILMMLTEEVAVEADIVLSNVEVVANLDFIFAKALYAKRIKATKPIVNNERYMDLKQARHPLIDPEIIVPNNIMLGKDFTTIVITGPNTGGKTVTLKTVGICVLMAQSGLHIPVMDESEICVFKNIFADIGDEQSIEQNLSTFSSHMVNIVDILEKADFESLVLFDELGAGTDPQEGAALAISILDEVCNRGARVVATTHYPELKAYGYNREQVINASVEFDVNTLSPTYKLLIGVPGRSNAFEISKRLGLSDRVIDRARNHISTDTNKIENMIAKLEESQKNAERERKEAEEHRKQSEKLHRELQRQIIEFNDERDEKLLKAQKEGEEKVEAAKQEAEGIIQELRQLRKAQLINVKDHELIEAKSRLEGAAPELVKKQKVNVKNTAPKQQLRSGDEVKVLTFGQKGQLLEKVSDTEWSVQIGILKMKVKESNMEYINTPKQTEKKAVASVKGRDYHVSLELDLRGERYEDAMMRVEKYLDDAQLASYPRVSIIHGKGTGALRQGVQDYLKKHRGVKTYRYGDMGEGGLGVTVVELK.

335–342 is an ATP binding site; the sequence is GPNTGGKT. The segment at 529–549 is disordered; sequence SQKNAERERKEAEEHRKQSEK. The region spanning 711–786 is the Smr domain; it reads LDLRGERYED…GLGVTVVELK (76 aa).

The protein belongs to the DNA mismatch repair MutS family. MutS2 subfamily. In terms of assembly, homodimer. Binds to stalled ribosomes, contacting rRNA.

Endonuclease that is involved in the suppression of homologous recombination and thus may have a key role in the control of bacterial genetic diversity. Its function is as follows. Acts as a ribosome collision sensor, splitting the ribosome into its 2 subunits. Detects stalled/collided 70S ribosomes which it binds and splits by an ATP-hydrolysis driven conformational change. Acts upstream of the ribosome quality control system (RQC), a ribosome-associated complex that mediates the extraction of incompletely synthesized nascent chains from stalled ribosomes and their subsequent degradation. Probably generates substrates for RQC. The protein is Endonuclease MutS2 of Bacillus mycoides (strain KBAB4) (Bacillus weihenstephanensis).